The following is a 330-amino-acid chain: Low affinity immunoglobulin gamma Fc region receptor II (330 aa).

The N-terminal stretch at 1 to 29 is a signal peptide; that stretch reads MESNWTVHVFSRTLCHMLLWTAVLNLAAG. Over 30–210 the chain is Extracellular; it reads THDLPKAVVK…QGPKSSRSLP (181 aa). 2 Ig-like C2-type domains span residues 50-106 and 131-189; these read EDTV…QTRL and GETI…LGRT. Cystine bridges form between C57–C99 and C138–C182. Residues N65, N92, N166, and N173 are each glycosylated (N-linked (GlcNAc...) asparagine). Residues 211–231 form a helical membrane-spanning segment; the sequence is VLTIVAAVTGIAVAAIVIILV. The Cytoplasmic portion of the chain corresponds to 232-330; it reads SLVYLKKKQV…ETEHDYQNHI (99 aa). The segment at 261 to 330 is disordered; that stretch reads VGEYRQPSGG…ETEHDYQNHI (70 aa). A Phosphotyrosine modification is found at Y290. An ITIM motif motif is present at residues 307-312; that stretch reads ITYSLL. Y309 bears the Phosphotyrosine; by SRC-type Tyr-kinases mark. A Phosphotyrosine modification is found at Y326.

Interacts with FGR. Interacts with LYN. Post-translationally, glycosylated. In terms of processing, when coaggregated to BCR, isoform IIB1 and isoform IIB1' become tyrosine phosphorylated and bind to the SH2 domains of the protein tyrosine phosphatase PTPC1. Phosphorylated by SRC-type Tyr-kinases such as LYN, BLK, FYN and SYK. In terms of tissue distribution, widely expressed by cells of hemopoietic origin. The isoforms are differentially expressed. Isoform IIB1 is preferentially expressed by cells of the lymphoid lineage, isoform IIB2 by cells of the myeloid lineage, and isoform IIB3 is released by macrophages and is present in the serum. Isoform IIB1' is expressed in myeloid and lymphoid cell lines, in normal spleen cells, and in resting or LPS-activated B-cells but is not detected in mesenteric lymph node cells.

It localises to the cell membrane. The protein localises to the cytoplasm. It is found in the cytoskeleton. Its subcellular location is the secreted. Functionally, receptor for the Fc region of complexed immunoglobulins gamma. Low affinity receptor. Involved in a variety of effector and regulatory functions such as phagocytosis of antigen-antibody complexes from the circulation and modulation of antibody production by B-cells. Isoform IIB1 and isoform IIB1' form caps but fail to mediate endocytosis or phagocytosis. Isoform IIB2 can mediate the endocytosis of soluble immune complexes via clathrin-coated pits. Isoform IIB1 and isoform IIB2 can down-regulate B-cell, T-cell, and mast cell activation when coaggregated to B-cell receptors for AG (BCR), T-cell receptors for AG (TCR), and Fc receptors, respectively. The protein is Low affinity immunoglobulin gamma Fc region receptor II (Fcgr2) of Mus musculus (Mouse).